The primary structure comprises 1430 residues: 3'-5' RNA helicase YTHDC2 (1430 aa).

The disordered stretch occupies residues 1–37; sequence MSRPSSVSPRQPAPGGGGGGGPSPCGPGGGGRAKGLK. The span at 14–33 shows a compositional bias: gly residues; the sequence is PGGGGGGGPSPCGPGGGGRA. The 69-residue stretch at 38–106 folds into the R3H domain; the sequence is DIRIDEEVKI…NRYLTVKKKD (69 aa). The 167-residue stretch at 203-369 folds into the Helicase ATP-binding domain; sequence VKIIKENKVV…FGSCPVIYIQ (167 aa). 216-223 contributes to the ATP binding site; sequence GETGSGKT. The DEAH box signature appears at 316–319; sequence DEVH. 2 ANK repeats span residues 506 to 538 and 539 to 571; these read TSAT…SKAS and NGWM…FGNL. The 173-residue stretch at 612-784 folds into the Helicase C-terminal domain; sequence LLYNICHSCD…ELCLHTKLLA (173 aa). Ser1089, Ser1090, and Ser1092 each carry phosphoserine. A compositionally biased stretch (polar residues) spans 1164-1174; the sequence is EQSAGLQQPSG. A disordered region spans residues 1164–1288; it reads EQSAGLQQPS…SPSPRPNMPV (125 aa). Low complexity predominate over residues 1191–1200; sequence SSWRSNNSRK. Ser1202 is subject to Phosphoserine. Positions 1231–1249 are enriched in basic and acidic residues; sequence KYKDRGILHPKRGTEDRSD. A compositionally biased stretch (low complexity) spans 1250 to 1264; the sequence is QSSLKSTDSSSYPSP. 3 positions are modified to phosphoserine: Ser1263, Ser1267, and Ser1281. Residues 1288–1418 form the YTH domain; the sequence is VRYFIMKSSN…LVGEQLLQLW (131 aa). Residues 1294–1296, Trp1310, and Trp1360 contribute to the RNA site; that span reads KSS.

It belongs to the DEAD box helicase family. DEAH subfamily. Interacts with MEIOC; binds transcripts that regulate the mitotic cell cycle inhibiting progression into metaphase, thereby allowing meiotic prophase to proceed normally. Interacts (via ANK repeats) with XRN1. Interacts with ZCCHC4. Associates with the small ribosomal subunit. Interacts with RBM46. As to expression, expressed in testis. Not detected in spermatogonia next to the tubule wall but is strongly expressed in spermatocytes, suggesting that it is up-regulated in germ cells upon entry into meiosis.

It is found in the cytoplasm. It localises to the perinuclear region. The enzyme catalyses ATP + H2O = ADP + phosphate + H(+). Its function is as follows. 3'-5' RNA helicase that plays a key role in the male and female germline by promoting transition from mitotic to meiotic divisions in stem cells. Specifically recognizes and binds N6-methyladenosine (m6A)-containing RNAs, a modification present at internal sites of mRNAs and some non-coding RNAs that plays a role in the efficiency of RNA processing and stability. Essential for ensuring a successful progression of the meiotic program in the germline by regulating the level of m6A-containing RNAs. Acts by binding and promoting degradation of m6A-containing mRNAs: the 3'-5' RNA helicase activity is required for this process and RNA degradation may be mediated by XRN1 exoribonuclease. Required for both spermatogenesis and oogenesis. This chain is 3'-5' RNA helicase YTHDC2, found in Homo sapiens (Human).